The following is an 883-amino-acid chain: Glutamate receptor 2 (883 aa).

The N-terminal stretch at 1–24 (MQKIMHISVLLSPVLWGLIFGVSS) is a signal peptide. Residues 25–543 (NSIQIGGLFP…GVFSFLDPLA (519 aa)) are Extracellular-facing. Cys-78 and Cys-330 are oxidised to a cystine. Residues Asn-256, Asn-370, Asn-406, and Asn-413 are each glycosylated (N-linked (GlcNAc...) asparagine). L-glutamate is bound by residues Pro-499, Thr-501, and Arg-506. Residues 544 to 564 (YEIWMCIVFAYIGVSVVLFLV) form a helical membrane-spanning segment. Residues 565–591 (SRFSPYEWHTEEFEDGRETQSSESTNE) lie on the Cytoplasmic side of the membrane. The helical; Pore-forming intramembrane region spans 592–607 (FGIFNSLWFSLGAFMQ). Residues 608 to 610 (QGC) lie within the membrane without spanning it. Cys-610 carries S-palmitoyl cysteine lipidation. Over 611–616 (DISPRS) the chain is Cytoplasmic. A helical transmembrane segment spans residues 617–637 (LSGRIVGGVWWFFTLIIISSY). Over 638–812 (TANLAAFLTV…EKTSALSLSN (175 aa)) the chain is Extracellular. L-glutamate is bound by residues Ser-675 and Thr-676. The residue at position 683 (Ser-683) is a Phosphoserine; by PKC. Phosphoserine; by PKG is present on Ser-717. Glu-726 lines the L-glutamate pocket. Residues Cys-739 and Cys-794 are joined by a disulfide bond. The chain crosses the membrane as a helical span at residues 813 to 833 (VAGVFYILVGGLGLAMLVALI). The Cytoplasmic portion of the chain corresponds to 834-883 (EFCYKSRAEAKRMKVAKNAQNINPSSSQNSQNFATYKEGYNVYGIESVKI). A lipid anchor (S-palmitoyl cysteine) is attached at Cys-836. Ser-860 and Ser-863 each carry phosphoserine. Positions 867 to 877 (ATYKEGYNVYG) are required for interaction with IQSEC1. Tyr-876 is modified (phosphotyrosine). Ser-880 carries the phosphoserine modification.

The protein belongs to the glutamate-gated ion channel (TC 1.A.10.1) family. GRIA2 subfamily. As to quaternary structure, homotetramer or heterotetramer of pore-forming glutamate receptor subunits. Tetramers may be formed by the dimerization of dimers. May interact with MPP4. Forms a ternary complex with GRIP1 and CSPG4. Interacts with ATAD1 in an ATP-dependent manner. ATAD1-catalyzed ATP hydrolysis disrupts binding to ATAD1 and to GRIP1 and leads to AMPAR complex disassembly. Interacts with GRIP1 and GRIP2. Interacts with NSF via its C-terminus. Isoform 1, but not isoform 3, interacts with PICK1. Interacts with CACNG2. Interacts with GRIA1 and SYNDIG1. Part of a complex containing GRIA2, NSF and NAPA and/or NAPB. Interacts with SNX27 (via PDZ domain); the interaction is required for recycling to the plasma membrane when endocytosed and prevent degradation in lysosomes. Interacts with LRFN1. Found in a complex with GRIA1, GRIA3, GRIA4, CNIH2, CNIH3, CACNG2, CACNG3, CACNG4, CACNG5, CACNG7 and CACNG8. Interacts with CACNG5. Interacts with OLFM2. Interacts with AP4B1, AP4E1 and AP4M1; probably indirect it mediates the somatodendritic localization of GRIA2 in neurons. Forms a complex with GRIP1, NSG1 and STX12; controls the intracellular fate of AMPAR and the endosomal sorting of the GRIA2 subunit toward recycling and membrane targeting. Interacts with IQSEC1; the interaction is required for ARF6 activation. Interacts (heterotetramer form) with CNIH2 and CNIH3; this interaction promotes expression at the plasma membrane and extensively modulates their gating properties by slowing deactivation and desensitization kinetics. Palmitoylated. Depalmitoylated upon L-glutamate stimulation. Cys-610 palmitoylation leads to Golgi retention and decreased cell surface expression. In contrast, Cys-836 palmitoylation does not affect cell surface expression but regulates stimulation-dependent endocytosis. Post-translationally, ubiquitinated by RNF167, leading to its degradation. In terms of processing, phosphorylation at Tyr-876 is required for interaction with IQSEC1 and ARF6 activation, which in turn triggers AMPAR internalization for persistent synaptic depression. N-glycosylated.

It localises to the cell membrane. The protein localises to the postsynaptic cell membrane. Its subcellular location is the postsynaptic density membrane. It catalyses the reaction Ca(2+)(in) = Ca(2+)(out). It carries out the reaction Na(+)(in) = Na(+)(out). Ionotropic glutamate receptor that functions as a ligand-gated cation channel, gated by L-glutamate and glutamatergic agonists such as alpha-amino-3-hydroxy-5-methyl-4-isoxazolepropionic acid (AMPA), quisqualic acid, and kainic acid. L-glutamate acts as an excitatory neurotransmitter at many synapses in the central nervous system and plays an important role in fast excitatory synaptic transmission. Binding of the excitatory neurotransmitter L-glutamate induces a conformation change, leading to the opening of the cation channel, and thereby converts the chemical signal to an electrical impulse upon entry of monovalent and divalent cations such as sodium and calcium. The receptor then desensitizes rapidly and enters in a transient inactive state, characterized by the presence of bound agonist. In the presence of CACNG4 or CACNG7 or CACNG8, shows resensitization which is characterized by a delayed accumulation of current flux upon continued application of L-glutamate. Through complex formation with NSG1, GRIP1 and STX12 controls the intracellular fate of AMPAR and the endosomal sorting of the GRIA2 subunit toward recycling and membrane targeting. The protein is Glutamate receptor 2 of Homo sapiens (Human).